The sequence spans 258 residues: MTNNKVALVTGGAQGIGFKIAERLVEDGFKVAVVDFNEEGAKAAALKLSSDGTKAIAIKADVSNRDDVFNAVRQTAAQFGDFHVMVNNAGLGPTTPIDTITEEQFKTVYGVNVAGVLWGIQAAHEQFKKFNHGGKIINATSQAGVEGNPGLSLYCSTKFAVRGLTQVAAQDLASEGITVNAFAPGIVQTPMMESIAVATAEEAGKPEAWGWEQFTSQIALGRVSQPEDVSNVVSFLAGKDSDYITGQTIIVDGGMRFR.

8–32 contributes to the NAD(+) binding site; the sequence is LVTGGAQGIGFKIAERLVEDGFKVA. Residue Ser-141 participates in substrate binding. Tyr-154 acts as the Proton acceptor in catalysis. Residue Lys-158 is part of the active site.

The protein belongs to the short-chain dehydrogenases/reductases (SDR) family.

It carries out the reaction (S)-acetoin + NAD(+) = diacetyl + NADH + H(+). Catalyzes the irreversible reduction of 2,3-butanediol to (S)-acetoin in the presence of NADH. This is Diacetyl reductase [(S)-acetoin forming] (butA) from Staphylococcus aureus (strain Mu50 / ATCC 700699).